A 172-amino-acid chain; its full sequence is Allergen Bos d 2 (172 aa).

An N-terminal signal peptide occupies residues Met-1–Ala-16. Gln-17 is subject to Pyrrolidone carboxylic acid. 2 cysteine pairs are disulfide-bonded: Cys-60/Cys-64 and Cys-79/Cys-170.

The protein belongs to the calycin superfamily. Lipocalin family. Found exclusively in skin. Produced in sweat glands and transported to the skin surface.

It is found in the secreted. Its function is as follows. Probable pheromone carrier. This chain is Allergen Bos d 2, found in Bos taurus (Bovine).